The sequence spans 292 residues: Small ribosomal subunit protein uS2 (292 aa).

A disordered region spans residues Thr265–Trp292. The span at Ala277 to Trp292 shows a compositional bias: low complexity.

This sequence belongs to the universal ribosomal protein uS2 family. As to quaternary structure, component of the small ribosomal subunit. Mature ribosomes consist of a small (40S) and a large (60S) subunit. The 40S subunit contains about 33 different proteins and 1 molecule of RNA (18S). The 60S subunit contains about 49 different proteins and 3 molecules of RNA (25S, 5.8S and 5S). Interacts with RPS21.

Its subcellular location is the cytoplasm. Required for the assembly and/or stability of the 40S ribosomal subunit. Required for the processing of the 20S rRNA-precursor to mature 18S rRNA in a late step of the maturation of 40S ribosomal subunits. The polypeptide is Small ribosomal subunit protein uS2 (Cryptococcus neoformans var. neoformans serotype D (strain B-3501A) (Filobasidiella neoformans)).